The following is a 478-amino-acid chain: Chromosomal replication initiator protein DnaA (478 aa).

A domain I, interacts with DnaA modulators region spans residues 1 to 90 (MSVELWQQCV…KRSSAPRAVQ (90 aa)). The domain II stretch occupies residues 91–141 (PASPPPAVVQAAPVAIEEASAARTVDAQPVAPATVRTERSVQVEGGLKHTS). The domain III, AAA+ region stretch occupies residues 142–358 (YLNRAFTFEN…GALKRVIAHS (217 aa)). The ATP site is built by Gly-186, Gly-188, Lys-189, and Thr-190. Positions 359–478 (HFTNHPITIE…YKNLLRTLTT (120 aa)) are domain IV, binds dsDNA.

Belongs to the DnaA family. As to quaternary structure, oligomerizes as a right-handed, spiral filament on DNA at oriC.

Its subcellular location is the cytoplasm. Functionally, plays an essential role in the initiation and regulation of chromosomal replication. ATP-DnaA binds to the origin of replication (oriC) to initiate formation of the DNA replication initiation complex once per cell cycle. Binds the DnaA box (a 9 base pair repeat at the origin) and separates the double-stranded (ds)DNA. Forms a right-handed helical filament on oriC DNA; dsDNA binds to the exterior of the filament while single-stranded (ss)DNA is stabiized in the filament's interior. The ATP-DnaA-oriC complex binds and stabilizes one strand of the AT-rich DNA unwinding element (DUE), permitting loading of DNA polymerase. After initiation quickly degrades to an ADP-DnaA complex that is not apt for DNA replication. Binds acidic phospholipids. The protein is Chromosomal replication initiator protein DnaA of Azotobacter vinelandii (strain DJ / ATCC BAA-1303).